The chain runs to 877 residues: Leucine--tRNA ligase (877 aa).

Positions 43 to 53 (PYPSGRIHMGH) match the 'HIGH' region motif. Positions 628–632 (KMSKS) match the 'KMSKS' region motif. ATP is bound at residue Lys631.

Belongs to the class-I aminoacyl-tRNA synthetase family.

The protein localises to the cytoplasm. The catalysed reaction is tRNA(Leu) + L-leucine + ATP = L-leucyl-tRNA(Leu) + AMP + diphosphate. This Brucella melitensis biotype 2 (strain ATCC 23457) protein is Leucine--tRNA ligase.